The primary structure comprises 326 residues: tRNA-modifying protein YgfZ (326 aa).

Folate-binding residues include W27 and W189.

The protein belongs to the tRNA-modifying YgfZ family.

The protein resides in the cytoplasm. Folate-binding protein involved in regulating the level of ATP-DnaA and in the modification of some tRNAs. It is probably a key factor in regulatory networks that act via tRNA modification, such as initiation of chromosomal replication. The chain is tRNA-modifying protein YgfZ from Escherichia coli O139:H28 (strain E24377A / ETEC).